Here is a 498-residue protein sequence, read N- to C-terminus: Cytochrome P450 monooxygenase astB (498 aa).

A helical membrane pass occupies residues 7-27 (FTTMPVVLLVGLVLYQLLAFT). N-linked (GlcNAc...) asparagine glycans are attached at residues Asn-237, Asn-248, and Asn-346. Residue Cys-425 coordinates heme.

Belongs to the cytochrome P450 family. It depends on heme as a cofactor.

The protein resides in the membrane. It carries out the reaction preasperterpenoid A + 4 reduced [NADPH--hemoprotein reductase] + 4 O2 = asperterpenoid A + 4 oxidized [NADPH--hemoprotein reductase] + 5 H2O + 5 H(+). It catalyses the reaction asperterpenoid A + 2 reduced [NADPH--hemoprotein reductase] + 2 O2 = asperterpenoid B + 2 oxidized [NADPH--hemoprotein reductase] + 3 H2O + 3 H(+). It participates in secondary metabolite biosynthesis; terpenoid biosynthesis. Its function is as follows. Cytochrome P450 monooxygenase; part of the gene cluster that mediates the biosynthesis of the asperterpenoids, sesterterpenes that exhibit anti-tuberculosis activity. The first step of the pathway is performed by the sesterterpene synthase astC that possesses both prenyl transferase and terpene cyclase activity, converting isopentenyl diphosphate and dimethylallyl diphosphate into geranylfarnesyl diphosphate (GFPP) and further converting GFPP into preasperterpenoid A, respectively. The cytochrome P450 monooxygenase astB then dually oxidizes preasperterpenoid A to produce asperterpenoid A along with a minor product, asperterpenoid B. Finally, the cytochrome P450 monooxygenase astA converts asperterpenoid A into asperterpenoid C. The polypeptide is Cytochrome P450 monooxygenase astB (Talaromyces wortmannii (Penicillium wortmannii)).